The chain runs to 555 residues: Arginine--tRNA ligase (555 aa).

The short motif at 117-127 (ANPNGPLHVGH) is the 'HIGH' region element.

This sequence belongs to the class-I aminoacyl-tRNA synthetase family.

It localises to the cytoplasm. It catalyses the reaction tRNA(Arg) + L-arginine + ATP = L-arginyl-tRNA(Arg) + AMP + diphosphate. This is Arginine--tRNA ligase from Methanospirillum hungatei JF-1 (strain ATCC 27890 / DSM 864 / NBRC 100397 / JF-1).